The following is a 265-amino-acid chain: Undecaprenyl-diphosphatase (265 aa).

8 helical membrane-spanning segments follow: residues 15 to 37 (GLTEFLPVSSTGHLIITGYLLEY), 41 to 61 (KAESFQVAIQLGAILAVVFLY), 85 to 105 (YLLALTSAPASVLGLLTHSFI), 109 to 129 (LFGPVTVAWALAAGALYILAV), 144 to 164 (VSPALALGIGMFQCLALWPGF), 183 to 203 (LAAEYSFVAAVPIMFAATGYD), 218 to 238 (FWAVGLLVSFASAWAAVKGFI), and 244 to 264 (VTFRPFAWYRLALAPVVLLFW).

Belongs to the UppP family.

The protein resides in the cell inner membrane. The catalysed reaction is di-trans,octa-cis-undecaprenyl diphosphate + H2O = di-trans,octa-cis-undecaprenyl phosphate + phosphate + H(+). In terms of biological role, catalyzes the dephosphorylation of undecaprenyl diphosphate (UPP). Confers resistance to bacitracin. The polypeptide is Undecaprenyl-diphosphatase (Oleidesulfovibrio alaskensis (strain ATCC BAA-1058 / DSM 17464 / G20) (Desulfovibrio alaskensis)).